The primary structure comprises 8081 residues: Muscle M-line assembly protein unc-89 (8081 aa).

The interval 24-57 is disordered; the sequence is DVNYSTHSSRSSYRSESLTSRTDGRGRSTSSEII. Positions 28–54 are enriched in low complexity; it reads STHSSRSSYRSESLTSRTDGRGRSTSS. Positions 63–127 constitute an SH3 domain; it reads RSYPVYIAIQ…PGSYFETPTE (65 aa). A DH domain is found at 152 to 330; the sequence is KRDQVYHELL…TTIPQRVHDL (179 aa). The PH domain maps to 342–498; the sequence is DTGKLGRIIR…WSGSRKSSLF (157 aa). The segment covering 479 to 495 has biased composition (polar residues); it reads ASDQQSEFSEWSGSRKS. The tract at residues 479 to 531 is disordered; sequence ASDQQSEFSEWSGSRKSSLFPGPEEGGPPRKKVKSPPVISPTGSSTSIYSGGS. Over residues 518 to 531 the composition is skewed to low complexity; it reads SPTGSSTSIYSGGS. Ig-like C2-type domains are found at residues 547–633, 648–736, 748–838, 946–1033, 1044–1132, and 1140–1227; these read GTRV…ASTS, PAFV…AELF, PEFQ…LKVR, PTFL…ARLV, PKFV…AKLT, and PEFD…NTLG. Residues Cys-568 and Cys-621 are joined by a disulfide bond. Composition is skewed to low complexity over residues 1283–1303 and 1326–1335; these read STKT…GVTV and EGSISVSKIE. Positions 1283 to 1892 are disordered; the sequence is STKTTTMSTT…PAPKLTRDLK (610 aa). Composition is skewed to basic and acidic residues over residues 1336 to 1351, 1361 to 1446, 1453 to 1490, 1515 to 1585, 1592 to 1832, and 1839 to 1857; these read VVSK…EGTP, ELPK…KEKS, KTGD…EKSP, MTHE…KSPE, KKSE…KEKS, and KTGD…EKPK. 4 consecutive RCSD domains span residues 1375 to 1475, 1479 to 1585, 1597 to 1695, and 1700 to 1799; these read KSPS…KSPE, DVKS…KSPE, EVKS…KSPQ, and KPAS…KSPE. Residues 1858–1868 show a composition bias toward pro residues; sequence SPTPKKSPPGS. A compositionally biased stretch (basic and acidic residues) spans 1875-1892; that stretch reads KSPEAEKPPAPKLTRDLK. Ig-like C2-type domains follow at residues 1982-2067, 2071-2163, 2171-2261, 2269-2359, 2367-2455, 2463-2564, 2563-2651, 2657-2746, 2754-2858, 2887-2980, 2994-3081, 3087-3183, 3189-3280, 3286-3376, 3384-3469, 3482-3572, 3580-3667, 3686-3777, 3817-3908, 3920-4009, 4018-4106, 4109-4201, 4212-4297, 4302-4387, 4400-4485, 4489-4580, 4588-4678, 4681-4771, 4873-4961, 4965-5057, 5067-5160, 5171-5260, 5277-5366, 5383-5472, 5487-5578, 5595-5685, 5701-5790, 5815-5904, 5925-6014, 6038-6130, and 6150-6239; these read PEFT…AQLT, PSTT…ADLK, PKFK…AKVT, PEFV…AQLK, PKFT…VQLA, PTFA…AKPA, PAFQ…GPLK, PVEF…ATLL, PDFL…SEAQ, PKFI…ATLT, PEFI…AFLT, PVFT…SKIT, PVFE…AEVT, PTFV…ANFA, PEFV…EALT, PEFT…ANMA, PLFV…ETVG, PLFI…LKIQ, PEFV…IIVT, PDFL…VTLT, PGFF…VPLT, PSET…ATVT, PSFK…AKVN, PEIV…AALT, PGIA…CALT, PKII…GKIT, PKIT…AQLT, PNVL…GSVV, PTSG…CKVT, PKFV…CEFQ, PRFN…ATYQ, PKIN…CSVN, PFFT…AHVQ, PKFI…SFVR, PRFT…GTAT, PKLM…CDVN, PGFT…AELV, PRIR…GSLN, and PGFV…AVLD. A disulfide bond links Cys-2582 and Cys-2635. 2 disulfides stabilise this stretch: Cys-2908-Cys-2964 and Cys-3015-Cys-3065. 2 disulfide bridges follow: Cys-3707–Cys-3759 and Cys-3838–Cys-3890. The tract at residues 4525 to 4553 is disordered; the sequence is KNGKEITPSDKAQPGSDGDNKPQLVIPDA. 4 cysteine pairs are disulfide-bonded: Cys-5298/Cys-5350, Cys-5404/Cys-5456, Cys-5508/Cys-5560, and Cys-5616/Cys-5669. Cystine bridges form between Cys-5836–Cys-5888 and Cys-5946–Cys-5998. The region spanning 6278 to 6374 is the Fibronectin type-III 1 domain; that stretch reads PDRGPFIKEV…SPPSRLMAPP (97 aa). 2 Ig-like C2-type domains span residues 6413-6502 and 6507-6596; these read PGVV…IMVD and PNFI…CTVT. Positions 6592–6878 constitute a Protein kinase 1 domain; the sequence is SCTVTVEAEG…VDEALDHPWI (287 aa). Disordered stretches follow at residues 6954-7130, 7177-7217, 7284-7311, 7324-7343, and 7348-7372; these read KKPP…QQKI, QVEA…PQPQ, PAIN…LSPR, RGKP…DDED, and DRKK…ERLE. Residues 6999–7009 show a composition bias toward pro residues; that stretch reads RQPPQIPPQPQ. Residues 7087–7110 are compositionally biased toward basic and acidic residues; sequence LEKRKLIPQDKGETPSHSKKEKTQ. Residues 7200-7215 are compositionally biased toward pro residues; that stretch reads KPTPSPTSPQKSPVPQ. Positions 7284-7302 are enriched in polar residues; that stretch reads PAINLSPNPKSPRRSTPGT. The Ig-like C2-type 50 domain maps to 7528 to 7617; that stretch reads PIFTARLRDV…TDKSSCRLIS (90 aa). Cys-7549 and Cys-7600 are oxidised to a cystine. One can recognise a Fibronectin type-III 2 domain in the interval 7623–7721; the sequence is RPGRPEAELS…SSRIVQTHGK (99 aa). Residues 7746–7773 are disordered; the sequence is STNQLGGISEESEEDSEARTANEDMKSN. The segment covering 7762–7771 has biased composition (basic and acidic residues); it reads EARTANEDMK. In terms of domain architecture, Protein kinase 2 spans 7785–8035; it reads FQIGGLKFKG…TDEALSHKFL (251 aa).

This sequence belongs to the protein kinase superfamily. CAMK Ser/Thr protein kinase family. As to quaternary structure, may interact (via fibronectin type-III domain 1, Ig-like C2-type domain 48/49 and protein kinase domain 1 or C-terminus of the interkinase region) with lim-9 (via LIM zinc-binding domain). May interact (via fibronectin type-III domain 1, Ig-like C2-type domain 48/49 and kinase protein domain 1 or Ig-like C2-type domain 50, fibronectin type-III domain 2 and kinase protein domain 2) with scpl-1 isoforms a and b (via FCP1 homology domain); the interaction may act as a molecular bridge to bring two unc-89 molecules together or to stabilize a loop between the 2 kinase domains. May interact (via SH3 domain) with unc-15. May interact (via Ig-like C2-type domain 1-3) with cpna-1 (via VWFA domain). May interact (via Ig-like C2-type domain 2/3 and, Ig-like C2-type domain 50 and fibronectin type-III domain 2) with mel-26 (via MATH domain). May interact (via DH and PH domains) with rho-1, ced-10, mig-2 and cdc-42. In terms of tissue distribution, expressed in body-wall, pharyngeal muscles and a few muscle cells of the tail (at protein level). Expressed in gonadal myoepithelial sheath cells (at protein level). Isoform c: Expressed in body wall and vulval muscles but not in pharyngeal muscles. Isoform d: Specifically expressed in vulval, intestinal, anal depressor and anal sphincter muscles.

It is found in the cytoplasm. Its subcellular location is the myofibril. The protein localises to the sarcomere. It localises to the m line. In terms of biological role, structural component of the muscle M line which is involved in assembly and organization of sarcomere myofilaments. The large isoform a, isoform b, isoform d and isoform f play an essential role in maintaining the organization of sarcomeres but not myofilament alignment during body wall muscle development whereas the small isoform c and isoform d appear to have a minor role. Isoform b and isoform f are required for the organization of unc-15/paramyosin into sarcomere thick filaments in body wall muscles. By binding mel-26, a substrate adapter of the cul-3 E3 ubiquitin-protein ligase complex, regulates the organization of myosin thick filaments, likely by preventing the degradation of microtubule severing protein mei-1. Acts as a guanine nucleotide exchange factor (GEF) for Rho GTPase rho-1 but not ced-10, mig-2 and cdc-42. The large isoforms regulate Ca(2+) signaling during muscle contraction by ensuring the correct localization of sarco-endoplamic reticulum Ca(2+) ATPase sca-1 and ryanodine receptor unc-68. By controlling the contraction and/or organization of pharyngeal muscles, plays a role in the formation of pharyngeal gland cell extension. The polypeptide is Muscle M-line assembly protein unc-89 (unc-89) (Caenorhabditis elegans).